The following is a 312-amino-acid chain: Ribosomal RNA small subunit methyltransferase H (312 aa).

Residues Gly35–His37, Asp55, Phe85, Asp101, and Gln108 contribute to the S-adenosyl-L-methionine site.

It belongs to the methyltransferase superfamily. RsmH family.

It localises to the cytoplasm. The enzyme catalyses cytidine(1402) in 16S rRNA + S-adenosyl-L-methionine = N(4)-methylcytidine(1402) in 16S rRNA + S-adenosyl-L-homocysteine + H(+). Its function is as follows. Specifically methylates the N4 position of cytidine in position 1402 (C1402) of 16S rRNA. In Buchnera aphidicola subsp. Acyrthosiphon pisum (strain Tuc7), this protein is Ribosomal RNA small subunit methyltransferase H.